Reading from the N-terminus, the 405-residue chain is L-carnitine CoA-transferase (405 aa).

The CoA site is built by Lys97 and Arg104. The Nucleophile role is filled by Asp169.

It belongs to the CoA-transferase III family. CaiB subfamily. Homodimer.

The protein resides in the cytoplasm. The enzyme catalyses crotonobetainyl-CoA + (R)-carnitine = crotonobetaine + (R)-carnitinyl-CoA. The catalysed reaction is 4-(trimethylamino)butanoyl-CoA + (R)-carnitine = (R)-carnitinyl-CoA + 4-(trimethylamino)butanoate. The protein operates within amine and polyamine metabolism; carnitine metabolism. Catalyzes the reversible transfer of the CoA moiety from gamma-butyrobetainyl-CoA to L-carnitine to generate L-carnitinyl-CoA and gamma-butyrobetaine. Is also able to catalyze the reversible transfer of the CoA moiety from gamma-butyrobetainyl-CoA or L-carnitinyl-CoA to crotonobetaine to generate crotonobetainyl-CoA. In Escherichia coli O139:H28 (strain E24377A / ETEC), this protein is L-carnitine CoA-transferase.